Consider the following 1070-residue polypeptide: MLRDGNEGMSTIPGFNQIQFEGFCRFMDQGLTEELYKFPKIEDTDQEIEFQLFVETYQLVEPLIKERDAVYESLTYSSEFYISAGLIWKTSRDMQEQTIFLGNIPLMNSLGTSIVNGIYRIVINQILQSPGIYYRSELDHNGISVYTGTIISDWGGRLELEIDKKARIWARVSRKQKISILVLSSAMGSNLREILENVCYPEIFLSFLTDKEKKKIGSKENAILEFYQQFACVGGDPVFSESLCKELQKKFFQQKCELGKIGRRNMNRRLRLDISQNNTFLLPRDILAAADHLIGMKFGMGTLDDMNHLKNKRIRSVADLIQDQLGLALVRLENMIRGTIGGALRHKLIPSPQNLVTSTPLTSTYESFFGLHPLSQVLDRTNPLTQIVHGRKLSYLGPGGLTGRTASFRIRDIHPSHYGRICPIDTSEGINVGLIGSLAIHAKIGRGGSLESPFYEISQRSKGARMLYLSPGKDEYYMVAAGNPLALNQGLQEEQVVPARYRQEFLTIAWEQVHLRSIFSFQYFSIGASLIPFIEHNDANRALMSSNMQRQAVPLSRSEKCIVGTGLERQAALDSGVLAIAEHEGKVIYTDTDKILLSGNGDTLNIPLVMYQRSNKNTCMHQKPQVQRGKYIKKGQILAYGAATIGGELALGKNVLVAYMPWEGYNFEDAVLISERLVYEDIYTSFHIRKYEIQTHVTSQGPERVTREIPHLEAHLLRNLDKNGIVMLGSWVETGEILVGKLTPQMVKESSYAPEDRLLRAILGIQVSTSKETCLKLPIGGRGRVIDVRWIQKRVGSSYNPETIRVYILQKREIKVGDKVAGRHGNKGIISKILPRQDMPYLQDGRPVDMVFNPLGVPSRMNVGQIFECSLGLAGGLLDRHYRIAPFDERYEQEASRKLVFSELYQASKQTATPWVFEPEYPGKSRIFDGRTGDPFEQPVIIGKPYILKLIHQVDDKIHGRSSGHYALVTQQPLRGRAKQGGQRVGEMEVWALEGFGVAYILQEMLTYKSDHIRARQEVLGTTIIGGAIPNPEDAPESFRLLVRELRSLALELNHFFVSEKTFKIKRKEA.

The protein belongs to the RNA polymerase beta chain family. In plastids the minimal PEP RNA polymerase catalytic core is composed of four subunits: alpha, beta, beta', and beta''. When a (nuclear-encoded) sigma factor is associated with the core the holoenzyme is formed, which can initiate transcription.

The protein resides in the plastid. Its subcellular location is the chloroplast. The enzyme catalyses RNA(n) + a ribonucleoside 5'-triphosphate = RNA(n+1) + diphosphate. Its function is as follows. DNA-dependent RNA polymerase catalyzes the transcription of DNA into RNA using the four ribonucleoside triphosphates as substrates. This is DNA-directed RNA polymerase subunit beta from Daucus carota (Wild carrot).